The sequence spans 137 residues: Transcription antitermination protein NusB (137 aa).

The protein belongs to the NusB family.

Functionally, involved in transcription antitermination. Required for transcription of ribosomal RNA (rRNA) genes. Binds specifically to the boxA antiterminator sequence of the ribosomal RNA (rrn) operons. The chain is Transcription antitermination protein NusB from Aeromonas salmonicida (strain A449).